Here is a 64-residue protein sequence, read N- to C-terminus: Large ribosomal subunit protein bL35 (64 aa).

It belongs to the bacterial ribosomal protein bL35 family.

The chain is Large ribosomal subunit protein bL35 from Chlorobium limicola (strain DSM 245 / NBRC 103803 / 6330).